Reading from the N-terminus, the 735-residue chain is MWLILLLLSGLSELGGLSQSQTEGTREKLHVQVTVPEKIRSVTSNGYETQVTYNLKIEGKTYTLDLMQKPFLPPNFRVYSYDNAGIMRSLEQKFQNICYFQGYIEGYPNSMVIVSTCTGLRGFLQFGNVSYGIEPLESSSGFEHVIYQVEPEKGGALLYAEKDIDLRDSQYKIRSIKPQRIVSHYLEIHIVVEKQMFEHIGADTAIVTQKIFQLIGLANAIFAPFNLTVILSSLEFWMDENKILTTGDANKLLYRFLKWKQSYLVLRPHDMAFLLVYRNTTDYVGATYQGKMCDKNYAGGVALHPKAVTLESLAIILVQLLSLSMGLAYDDVNKCQCGVPVCVMNPEAPHSSGVRAFSNCSMEDFSKFITSQSSHCLQNQPRLQPSYKMAVCGNGEVEEDEICDCGKKGCAEMPPPCCNPDTCKLSDGSECSSGICCNSCKLKRKGEVCRLAQDECDVTEYCNGTSEVCEDFFVQNGHPCDNRKWICINGTCQSGEQQCQDLFGIDAGFGSSECFWELNSKSDISGSCGISAGGYKECPPNDRMCGKIICKYQSENILKLRSATVIYANISGHVCVSLEYPQGHNESQKMWVRDGTVCGSNKVCQNQKCVADTFLGYDCNLEKCNHHGVCNNKKNCHCDPTYLPPDCKRMKDSYPGGSIDSGNKERAEPIPVRPYIASAYRSKSPRWPFFLIIPFYVVILVLIGMLVKVYSQRMKWRMDDFSSEEQFESESESKD.

A signal peptide spans 1–18; the sequence is MWLILLLLSGLSELGGLS. Positions 19-180 are excised as a propeptide; that stretch reads QSQTEGTREK…YKIRSIKPQR (162 aa). Over 19 to 686 the chain is Extracellular; that stretch reads QSQTEGTREK…ASAYRSKSPR (668 aa). Asparagine 128, asparagine 226, and asparagine 279 each carry an N-linked (GlcNAc...) asparagine glycan. The 198-residue stretch at 184–381 folds into the Peptidase M12B domain; it reads HYLEIHIVVE…QSSHCLQNQP (198 aa). 4 cysteine pairs are disulfide-bonded: cysteine 293/cysteine 376, cysteine 335/cysteine 360, cysteine 337/cysteine 342, and cysteine 449/cysteine 469. Residues asparagine 359, asparagine 463, asparagine 489, asparagine 569, and asparagine 585 are each glycosylated (N-linked (GlcNAc...) asparagine). The 88-residue stretch at 389–476 folds into the Disintegrin domain; sequence MAVCGNGEVE…EVCEDFFVQN (88 aa). Residues 615–648 enclose the EGF-like domain; the sequence is LGYDCNLEKCNHHGVCNNKKNCHCDPTYLPPDCK. 3 disulfide bridges follow: cysteine 619–cysteine 630, cysteine 624–cysteine 636, and cysteine 638–cysteine 647. A helical membrane pass occupies residues 687–707; sequence WPFFLIIPFYVVILVLIGMLV. The Cytoplasmic segment spans residues 708–735; that stretch reads KVYSQRMKWRMDDFSSEEQFESESESKD. Residue serine 729 is modified to Phosphoserine.

In terms of assembly, heterodimer with ADAM1/fertilin subunit alpha. The signal and the metalloprotease domain are cleaved during the epididymal maturation of the spermatozoa. As to expression, expressed in the testis and testicular sperm (at protein level).

Its subcellular location is the membrane. Functionally, sperm surface membrane protein that may be involved in sperm-egg plasma membrane adhesion and fusion during fertilization. Could have a direct role in sperm-zona binding or migration of sperm from the uterus into the oviduct. Interactions with egg membrane could be mediated via binding between its disintegrin-like domain to one or more integrins receptors on the egg. This is a non catalytic metalloprotease-like protein. This is Disintegrin and metalloproteinase domain-containing protein 2 from Mus musculus (Mouse).